The following is a 340-amino-acid chain: Chitinase 7 (340 aa).

The first 32 residues, 1 to 32 (MIAARAANLQVAMKALALAVLALAYAAATARA), serve as a signal peptide directing secretion. Residues 33–73 (EQCGRQAGGARCPNRLCCSRWGWCGLTDDYCKGGCQSQCRV) form the Chitin-binding type-1 domain. Disulfide bonds link Cys35-Cys50, Cys44-Cys56, Cys49-Cys63, Cys67-Cys71, Cys118-Cys173, Cys185-Cys193, and Cys293-Cys323.

Belongs to the glycosyl hydrolase 19 family. Chitinase class I subfamily. Expressed in pistils, stamens and lodicules.

It carries out the reaction Random endo-hydrolysis of N-acetyl-beta-D-glucosaminide (1-&gt;4)-beta-linkages in chitin and chitodextrins.. Its function is as follows. Hydrolyzes chitin and may play a role in defense against fungal pathogens containing chitin. The protein is Chitinase 7 (Cht7) of Oryza sativa subsp. japonica (Rice).